Reading from the N-terminus, the 327-residue chain is Small ribosomal subunit protein uS2 (327 aa).

The tract at residues 258 to 327 (AGHTPVSETL…PGVADGAALE (70 aa)) is disordered.

It belongs to the universal ribosomal protein uS2 family.

This is Small ribosomal subunit protein uS2 from Anaplasma marginale (strain St. Maries).